Here is an 89-residue protein sequence, read N- to C-terminus: Small ribosomal subunit protein uS15 (89 aa).

Residues M1–E10 show a composition bias toward basic and acidic residues. The segment at M1 to S24 is disordered.

The protein belongs to the universal ribosomal protein uS15 family. In terms of assembly, part of the 30S ribosomal subunit. Forms a bridge to the 50S subunit in the 70S ribosome, contacting the 23S rRNA.

One of the primary rRNA binding proteins, it binds directly to 16S rRNA where it helps nucleate assembly of the platform of the 30S subunit by binding and bridging several RNA helices of the 16S rRNA. In terms of biological role, forms an intersubunit bridge (bridge B4) with the 23S rRNA of the 50S subunit in the ribosome. The polypeptide is Small ribosomal subunit protein uS15 (Rhodopseudomonas palustris (strain HaA2)).